Here is a 288-residue protein sequence, read N- to C-terminus: Pantothenate synthetase (288 aa).

35–42 (MGALHDGH) is a binding site for ATP. The active-site Proton donor is His-42. Gln-66 is a binding site for (R)-pantoate. Position 66 (Gln-66) interacts with beta-alanine. ATP is bound at residue 152-155 (GEKD). Gln-158 serves as a coordination point for (R)-pantoate. Residues Gly-181 and 189 to 192 (LSSR) contribute to the ATP site.

This sequence belongs to the pantothenate synthetase family. In terms of assembly, homodimer.

The protein localises to the cytoplasm. The catalysed reaction is (R)-pantoate + beta-alanine + ATP = (R)-pantothenate + AMP + diphosphate + H(+). The protein operates within cofactor biosynthesis; (R)-pantothenate biosynthesis; (R)-pantothenate from (R)-pantoate and beta-alanine: step 1/1. Functionally, catalyzes the condensation of pantoate with beta-alanine in an ATP-dependent reaction via a pantoyl-adenylate intermediate. This chain is Pantothenate synthetase, found in Maricaulis maris (strain MCS10) (Caulobacter maris).